The following is a 381-amino-acid chain: Alkanesulfonate monooxygenase (381 aa).

This sequence belongs to the SsuD family. In terms of assembly, homotetramer.

The catalysed reaction is an alkanesulfonate + FMNH2 + O2 = an aldehyde + FMN + sulfite + H2O + 2 H(+). Catalyzes the desulfonation of aliphatic sulfonates. The chain is Alkanesulfonate monooxygenase from Enterobacter sp. (strain 638).